We begin with the raw amino-acid sequence, 702 residues long: MPLEMFMFATTRMALLIGGAIGGATFPLFAQETTKNDTVIVTSPVQSGATKLATPDIETPQSVSIITRQQFEEQGATSVRQAVSYTPGVYSNQIGASNRFDYIVLRGFSDGSLDNVYLDGLKMMGDTNSHSSLVVDPWFLEDIEVVRGPASVLYGRSSPGGIVALTSRKPAFDAGGEVKLFAGNNNQRGAAFDVTGPLDDNERVAARLSGMTRYADSQFTPLKEERYALMPSLTWRITDRTRLDLMAYPHRDPEGGSHSGLPYQGTVVPYNGGKISNTFFEGEDDYDKYDRRENMVGYNIEHLFDNGWSVRQKLRYLHTKVTLNQVYAAGWLNETALNRGYSGSGEKMSAIALDNQLDGSVDTGAINHRLLVGIDYQDRSNHTTGYYGAFPPIDAFNPVYGAQPDYITLYSREKHKLRQTGYYLQDQMSWDRWRFTLGGRYDRVSVSNIDKLHDSRSDLDKNNVSTRAALLYLFDNGVAPYLSYSTAFTPTSFADENGNVLEPMKGKQWEAGVKYEPPGGNSQFSAAVYRINQTNIATKEEPTDPYRSIGEIESKGVELEAISHLSDSVRLQAAYTYTDIRYKKSSPQEQGKRAVYAPRNQASAWLSYDVKSGLLEGLTLGSGIRYVNGVTSDRLNTHTLPSYTLVDMVVGYDLSSIGLNGLSAQLNVNNLTDKRYVAACNSLSYCYFGAERSIVGSVSWAF.

Positions 1–30 (MPLEMFMFATTRMALLIGGAIGGATFPLFA) are cleaved as a signal peptide. A TBDR plug domain is found at 55–168 (PDIETPQSVS…PGGIVALTSR (114 aa)). The 530-residue stretch at 173 to 702 (DAGGEVKLFA…SIVGSVSWAF (530 aa)) folds into the TBDR beta-barrel domain.

The protein belongs to the TonB-dependent receptor family.

It localises to the cell outer membrane. Functionally, ferrioxamine binding and uptake, in association with the TonB protein. The protein is Ferrioxamine B receptor (foxA) of Salmonella typhimurium (strain LT2 / SGSC1412 / ATCC 700720).